The following is a 503-amino-acid chain: MKILRGVSRQMCTSRPEVRVRFAPSPTGFLHLGGLRTALYNFLFSRQRRGVFILRLEDTDQKRLVPGAAEHIEDMLEWAGIPPDESSRRGGDYGPYVQSERLHLYTEAASSLLNTGHAYYCFCSNQRLELLKKEAQRSGHAPRYDNRCRRLQPQQVEQKLAAGVPAVVRFKLHTGTEEFQDLVFGWTGHAVGAVEGDPVILKADGYPTYHLASVVDDHHMRISHVLRGCEWLISSAKHLQLYRALRWTPPTYAHLPLLLNRDGSKLSKRQGDIFLQSFRDRGVLPETLLDLVTHAGSGFSDNRMGRRLDELIRDFNISKITTHSALLDLDKLEEFSRLHLQRRIEDPQQCVWLCEELKQMVKHTHSSEISAAAVLEPEYIERVLQLRKGHISSLQDLLSSTHSYLWVRPRVSQTQLQSESAHAKDIATAVMQMVLAGGSLVSMERLSSELKQISSRTNSTHSSVMKVLRLLLSAQQRGPSVAEMMLSLGEQEVCVRLQKALEL.

The transit peptide at 1–22 directs the protein to the mitochondrion; the sequence is MKILRGVSRQMCTSRPEVRVRF. 21 to 23 serves as a coordination point for L-glutamate; it reads RFA. The 'HIGH' region motif lies at 26–34; it reads PTGFLHLGG. Histidine 31 serves as a coordination point for ATP. L-glutamate is bound by residues glutamate 57, 209–213, and arginine 227; that span reads YHLAS. Residues glutamate 230 and 265–269 contribute to the ATP site; that span reads KLSKR. The 'KMSKS' region signature appears at 265–269; sequence KLSKR.

Belongs to the class-I aminoacyl-tRNA synthetase family. Glutamate--tRNA ligase type 1 subfamily.

It is found in the mitochondrion matrix. The enzyme catalyses tRNA(Glx) + L-glutamate + ATP = L-glutamyl-tRNA(Glx) + AMP + diphosphate. The catalysed reaction is tRNA(Glu) + L-glutamate + ATP = L-glutamyl-tRNA(Glu) + AMP + diphosphate. It catalyses the reaction tRNA(Gln) + L-glutamate + ATP = L-glutamyl-tRNA(Gln) + AMP + diphosphate. In terms of biological role, non-discriminating glutamyl-tRNA synthetase that catalyzes aminoacylation of both mitochondrial tRNA(Glu) and tRNA(Gln) and participates in RNA aminoacylation for mitochondrial protein translation. Attachs glutamate to tRNA(Glu) or tRNA(Gln) in a two-step reaction: glutamate is first activated by ATP to form Glu-AMP and then transferred to the acceptor end of tRNA(Glu) or tRNA(Gln). The sequence is that of Nondiscriminating glutamyl-tRNA synthetase EARS2, mitochondrial from Danio rerio (Zebrafish).